The chain runs to 176 residues: Membrane glycoprotein UL144 (176 aa).

The N-terminal stretch at 1–20 (MKPLIMLICFAVILLQLGVT) is a signal peptide. TNFR-Cys repeat units lie at residues 22-56 (VCQH…SVTC) and 58-95 (PCPN…NTVC). 6 cysteine pairs are disulfide-bonded: C23-C34, C35-C48, C38-C56, C59-C71, C74-C87, and C77-C95. The helical transmembrane segment at 134–154 (LAWLSLFIFLVGIILLILYLI) threads the bilayer.

As to quaternary structure, interacts with host TRIM23; this interaction causes auto-ubiquitination of TRAF6, leading to NF-kappaB activation.

It is found in the membrane. In terms of biological role, activates NF-kappaB in a tumor necrosis factor receptor (TNFR)-associated factor 6 (TRAF6)-dependent manner, causing the up-regulation of the chemokine CCL22. The sequence is that of Membrane glycoprotein UL144 (UL144) from Homo sapiens (Human).